We begin with the raw amino-acid sequence, 559 residues long: Putative ankyrin repeat protein RBE_0902 (559 aa).

ANK repeat units lie at residues 11–40 (DGWT…EQAI), 46–75 (DGNT…DQAI), 81–110 (DGNT…TKQN), 158–189 (DDWT…VINH), 228–257 (NNDT…DQAI), 263–292 (DGNT…DQAI), 298–327 (YGNT…EQAI), 333–364 (QCDT…AINC), 372–402 (FGFT…EVII), and 524–554 (IDNN…WGLE).

The sequence is that of Putative ankyrin repeat protein RBE_0902 from Rickettsia bellii (strain RML369-C).